The sequence spans 89 residues: Pigment-dispersing hormone peptides (89 aa).

A signal peptide spans 1-22 (MTAMAVSGKLLTALVLSTYILG). The residue at position 86 (Ala86) is an Alanine amide.

It belongs to the arthropod PDH family.

It localises to the secreted. Its function is as follows. Capable of inducing pigment dispersion in the chromatophores of the fiddler crab Uca pugilator. The chain is Pigment-dispersing hormone peptides from Romalea microptera (Eastern lubber grasshopper).